The chain runs to 318 residues: N-succinylornithine carbamoyltransferase (318 aa).

Residues 47 to 50, W75, and R110 contribute to the carbamoyl phosphate site; that span reads SLRT. E142 provides a ligand contact to N(2)-succinyl-L-ornithine. Residue 147–150 coordinates carbamoyl phosphate; the sequence is HPLQ. 2 residues coordinate N(2)-succinyl-L-ornithine: H176 and K236. A carbamoyl phosphate-binding site is contributed by 274-275; it reads CL. A N(2)-succinyl-L-ornithine-binding site is contributed by R278. Residue R302 coordinates carbamoyl phosphate.

It belongs to the aspartate/ornithine carbamoyltransferase superfamily. SOTCase family. Homotrimer.

It carries out the reaction N(2)-succinyl-L-ornithine + carbamoyl phosphate = N(2)-succinyl-L-citrulline + phosphate + H(+). It functions in the pathway amino-acid biosynthesis; L-arginine biosynthesis. Catalyzes the transfer of the carbamoyl group from carbamoyl phosphate to the delta-amino group of N(2)-succinyl-L-ornithine to produce N(2)-succinyl-L-citrulline. Is essential for arginine biosynthesis. Has no activity with either L-ornithine or L-aspartate as substrate. Also has no detectable AOTCase activity, being unable to convert N(2)-acetyl-L-ornithine to N(2)-acetyl-L-citrulline. The sequence is that of N-succinylornithine carbamoyltransferase from Bacteroides thetaiotaomicron (strain ATCC 29148 / DSM 2079 / JCM 5827 / CCUG 10774 / NCTC 10582 / VPI-5482 / E50).